The chain runs to 150 residues: Single-stranded DNA-binding protein 1 (150 aa).

Residues 1–104 (MINNVVLVGR…VVADTFQMLE (104 aa)) enclose the SSB domain. Polar residues predominate over residues 103–120 (LESNKTQGQQTSKPQAQN). Positions 103 to 150 (LESNKTQGQQTSKPQAQNKKPQAPDPFKAPAADPFAGGTEISDDDLPF) are disordered. The span at 121-138 (KKPQAPDPFKAPAADPFA) shows a compositional bias: low complexity. An Important for interaction with partner proteins motif is present at residues 145-150 (DDDLPF).

As to quaternary structure, homotetramer.

In terms of biological role, plays an important role in DNA replication, recombination and repair. Binds to ssDNA and to an array of partner proteins to recruit them to their sites of action during DNA metabolism. This Lactococcus lactis subsp. lactis (strain IL1403) (Streptococcus lactis) protein is Single-stranded DNA-binding protein 1 (ssb1).